The sequence spans 712 residues: Polyribonucleotide nucleotidyltransferase (712 aa).

Residues D487 and D493 each coordinate Mg(2+). The KH domain occupies 554-613 (PKIITMTINPDKIRDVIGPSGKQINKIIEETGVKIDIEQDGTVFISSINQEMNDKAKKII). An S1 motif domain is found at 623–691 (GEIYEGKVKR…KQGRVNLSRK (69 aa)).

The protein belongs to the polyribonucleotide nucleotidyltransferase family. Mg(2+) serves as cofactor.

It is found in the cytoplasm. The catalysed reaction is RNA(n+1) + phosphate = RNA(n) + a ribonucleoside 5'-diphosphate. Functionally, involved in mRNA degradation. Catalyzes the phosphorolysis of single-stranded polyribonucleotides processively in the 3'- to 5'-direction. This Bacillus anthracis protein is Polyribonucleotide nucleotidyltransferase.